A 102-amino-acid chain; its full sequence is Thioredoxin (102 aa).

Residues 2–102 (LHIDELTFEN…ILIHTINKYL (101 aa)) enclose the Thioredoxin domain. Catalysis depends on nucleophile residues C29 and C32. Cysteines 29 and 32 form a disulfide.

This sequence belongs to the thioredoxin family.

The protein localises to the plastid. Its subcellular location is the chloroplast. Functionally, participates in various redox reactions through the reversible oxidation of its active center dithiol to a disulfide and catalyzes dithiol-disulfide exchange reactions. This Cyanidioschyzon merolae (strain NIES-3377 / 10D) (Unicellular red alga) protein is Thioredoxin (trxA).